The sequence spans 360 residues: Type II methyltransferase M2.ScrFI (360 aa).

One can recognise an SAM-dependent MTase C5-type domain in the interval 2-360 (LRVFEAFAGY…SLFKELFKSQ (359 aa)). Residue C127 is part of the active site.

The protein belongs to the class I-like SAM-binding methyltransferase superfamily. C5-methyltransferase family.

It catalyses the reaction a 2'-deoxycytidine in DNA + S-adenosyl-L-methionine = a 5-methyl-2'-deoxycytidine in DNA + S-adenosyl-L-homocysteine + H(+). A methylase, recognizes the double-stranded sequence 5'-CCNGG-3', methylates C-2 on both strands, and protects the DNA from cleavage by the ScrFI endonuclease. The sequence is that of Type II methyltransferase M2.ScrFI (scrFIBM) from Lactococcus lactis subsp. cremoris (Streptococcus cremoris).